Here is a 183-residue protein sequence, read N- to C-terminus: Outer membrane protein H.8 (183 aa).

An N-terminal signal peptide occupies residues 1 to 17 (MKAYLALISAAVIGLAA). C18 carries the N-palmitoyl cysteine lipid modification. C18 carries S-diacylglycerol cysteine lipidation. Residues 27 to 51 (AEATPAAEAPASEAPAAEAAPADAA) form a disordered region. In terms of domain architecture, Plastocyanin-like spans 57–183 (GNCAATVESN…LMNGKVTLVD (127 aa)). Cu cation is bound by residues H102, C166, H171, and M175.

Requires Cu cation as cofactor.

It localises to the cell outer membrane. The chain is Outer membrane protein H.8 from Neisseria meningitidis serogroup B (strain ATCC BAA-335 / MC58).